A 220-amino-acid chain; its full sequence is Glutathione S-transferase U23 (220 aa).

Residues 3 to 82 (EEIILLDYWA…YIDELWPDTN (80 aa)) enclose the GST N-terminal domain. Glutathione contacts are provided by residues 13 to 14 (SM), 39 to 40 (NK), 53 to 54 (KI), and 66 to 67 (ES). In terms of domain architecture, GST C-terminal spans 88–208 (DPYQRAQARF…LPDSDKVLKS (121 aa)).

It belongs to the GST superfamily. Tau family.

It localises to the cytoplasm. The protein localises to the cytosol. It carries out the reaction RX + glutathione = an S-substituted glutathione + a halide anion + H(+). Its function is as follows. May be involved in the conjugation of reduced glutathione to a wide number of exogenous and endogenous hydrophobic electrophiles and have a detoxification role against certain herbicides. The sequence is that of Glutathione S-transferase U23 (GSTU23) from Arabidopsis thaliana (Mouse-ear cress).